A 103-amino-acid chain; its full sequence is Cytochrome c-552 (103 aa).

Positions 1-22 are cleaved as a signal peptide; sequence MKTAWLGTFAASALLVAGYAQA. Heme c contacts are provided by C32, C35, H36, and M81.

As to quaternary structure, monomer. Binds 1 heme c group covalently per subunit.

It is found in the periplasm. Its function is as follows. Monoheme c-type cytochrome. Probable electron donor to membrane cytochrome oxidase and to periplasmic nitrite reductase. The polypeptide is Cytochrome c-552 (cyt) (Nitrosomonas europaea (strain ATCC 19718 / CIP 103999 / KCTC 2705 / NBRC 14298)).